Consider the following 105-residue polypeptide: Toxin ParE2 (105 aa).

It belongs to the RelE toxin family.

Functionally, toxic component of a type II toxin-antitoxin (TA) system. Its toxic effect is neutralized by coexpression with cognate antitoxin ParD2. In Mycobacterium tuberculosis (strain CDC 1551 / Oshkosh), this protein is Toxin ParE2 (parE2).